The primary structure comprises 309 residues: Aspartate carbamoyltransferase catalytic subunit (309 aa).

2 residues coordinate carbamoyl phosphate: Arg55 and Thr56. Lys85 contacts L-aspartate. Residues Arg106, His135, and Gln138 each contribute to the carbamoyl phosphate site. The L-aspartate site is built by Arg168 and Arg230. 2 residues coordinate carbamoyl phosphate: Leu268 and Pro269.

This sequence belongs to the aspartate/ornithine carbamoyltransferase superfamily. ATCase family. Heterododecamer (2C3:3R2) of six catalytic PyrB chains organized as two trimers (C3), and six regulatory PyrI chains organized as three dimers (R2).

It catalyses the reaction carbamoyl phosphate + L-aspartate = N-carbamoyl-L-aspartate + phosphate + H(+). Its pathway is pyrimidine metabolism; UMP biosynthesis via de novo pathway; (S)-dihydroorotate from bicarbonate: step 2/3. Its function is as follows. Catalyzes the condensation of carbamoyl phosphate and aspartate to form carbamoyl aspartate and inorganic phosphate, the committed step in the de novo pyrimidine nucleotide biosynthesis pathway. The sequence is that of Aspartate carbamoyltransferase catalytic subunit from Vibrio vulnificus (strain YJ016).